We begin with the raw amino-acid sequence, 319 residues long: Probable arabinan endo-1,5-alpha-L-arabinosidase A (319 aa).

The signal sequence occupies residues 1-19 (MYLQSSLALVLLRAAVVHG). D34 (proton acceptor) is an active-site residue. N-linked (GlcNAc...) asparagine glycosylation is present at N53. The active-site Proton donor is E198.

This sequence belongs to the glycosyl hydrolase 43 family.

The protein resides in the secreted. It carries out the reaction Endohydrolysis of (1-&gt;5)-alpha-arabinofuranosidic linkages in (1-&gt;5)-arabinans.. It functions in the pathway glycan metabolism; L-arabinan degradation. Functionally, endo-1,5-alpha-L-arabinanase involved in degradation of pectin. Its preferred substrate is linear 1,5-alpha-L-arabinan. This chain is Probable arabinan endo-1,5-alpha-L-arabinosidase A (abnA), found in Aspergillus flavus (strain ATCC 200026 / FGSC A1120 / IAM 13836 / NRRL 3357 / JCM 12722 / SRRC 167).